The following is a 612-amino-acid chain: Chaperone protein DnaK (612 aa).

Thr-173 carries the phosphothreonine; by autocatalysis modification. Over residues 524-544 (DDKVSEEDKQKAESAKDELKQ) the composition is skewed to basic and acidic residues. Disordered regions lie at residues 524–560 (DDKVSEEDKQKAESAKDELKQALESGDMEQVKAKKDA) and 572–612 (LYEQ…DDKK). A compositionally biased stretch (low complexity) spans 574-586 (EQVQQEAQQASGE). Residues 587-612 (QGEESGNQDDDVVDADYSEVDDDDKK) show a composition bias toward acidic residues.

This sequence belongs to the heat shock protein 70 family.

Its function is as follows. Acts as a chaperone. The sequence is that of Chaperone protein DnaK from Oceanobacillus iheyensis (strain DSM 14371 / CIP 107618 / JCM 11309 / KCTC 3954 / HTE831).